Reading from the N-terminus, the 1234-residue chain is MAGARPGVHALQLEPPTVVETLRRGSKFIKWDEEASSRNLVTLRLDPNGFFLYWTGPNMEVDTLDISSIRDTRTGRYARLPKDPKIREVLGFGGPDTRLEEKLMTVVAGPDPVNTTFLNFMAVQDDTVKVWSEELFKLAMNILAQNAPEHVLRKAYTKLKLQVNQDGRIPVKNILKMFSADKKRVETALICGLNFNRSESIRPDEFSLEIFERFLNKLLLRPDIDKILLEIGAKGKPYLTLEQLMDFINQKQRDPRLNEVLYPPLRSSQARLLIEKYEPNKQFLERDQMSMEGFSRYLGGEENGILPLEALDLSMDMTQPLSAYFINSSHNTYLTAGQLAGTSSVEMYRQALLWGCRCVELDVWKGRPPEEEPFITHGFTMTTEVPLRDVLEAIAETAFKTSPYPVILSFENHVDSAKQQAKMAEYCRSIFGEALLIDPLDKYPLSAGTPLPSPQDLMGRILVKNKKRHRPSTGVPDSSVAKRPLEQSNSALSESSAATEPSSPQLGSPSSDSCPGLSNGEEVGLEKTSLEPQKSLGEEGLNRGPNVLMPDRDREDEEEDEEEEETTDPKKPTTDEGTASSEVNATEEMSTLVNYVEPVKFKSFEASRKRNKCFEMSSFVETKAMEQLTKSPMEFVEYNKQQLSRIYPKGTRVDSSNYMPQLFWNVGCQLVALNFQTLDLPMQLNAGVFEYNGRSGYLLKPEFMRRPDKSFDPFTEVIVDGIVANALRVKVISGQFLSDRKVGIYVEVDMFGLPVDTRRKYRTRTSQGNSFNPVWDEEPFDFPKVVLPTLASLRIAAFEEGGRFVGHRILPVSAIRSGYHYVCLRNEANQPLCLPALLIYTEASDYIPDDHQDYAEALINPIKHVSLMDQRAKQLAALIGESEAQASTEMCQETPSQQQGSQLSSNPVPNPLDDSPRWPPGPTTSPTSTSLSSPGQRDDLIASILSEVTPTPLEELRSHKAMVKLRSRQDRDLRELHKKHQRKAVALTRRLLDGLAQARAEGKCRPSSSALSRATNVEDVKEEEKEAARQYREFQNRQVQSLLELREAQADAETERRLEHLKQAQQRLREVVLDAHTTQFKRLKELNEREKKELQKILDRKRNNSISEAKTREKHKKEVELTEINRRHITESVNSIRRLEEAQKQRHERLLAGQQQVLQQLVEEEPKLVAQLTQECQEQRERLPQEIRRCLLGETSEGLGDGPLVACASNGHAAGSGGHQSGADSESQEENTQL.

Residue Ala-2 is modified to N-acetylalanine. Residues 315 to 466 (MDMTQPLSAY…LMGRILVKNK (152 aa)) form the PI-PLC X-box domain. Active-site residues include His-330 and His-377. The segment at 465-586 (NKKRHRPSTG…GTASSEVNAT (122 aa)) is disordered. Residues Ser-472, Ser-488, Ser-493, and Ser-535 each carry the phosphoserine modification. Residues 486–513 (EQSNSALSESSAATEPSSPQLGSPSSDS) show a composition bias toward low complexity. A compositionally biased stretch (acidic residues) spans 554–566 (REDEEEDEEEEET). Residues 577 to 586 (GTASSEVNAT) are compositionally biased toward polar residues. One can recognise a PI-PLC Y-box domain in the interval 589-705 (MSTLVNYVEP…GYLLKPEFMR (117 aa)). The C2 domain maps to 706–834 (RPDKSFDPFT…RNEANQPLCL (129 aa)). Residues 886–907 (ASTEMCQETPSQQQGSQLSSNP) show a composition bias toward polar residues. The segment at 886 to 936 (ASTEMCQETPSQQQGSQLSSNPVPNPLDDSPRWPPGPTTSPTSTSLSSPGQ) is disordered. The span at 924 to 934 (TSPTSTSLSSP) shows a compositional bias: low complexity. Phosphoserine is present on residues Ser-925 and Ser-1105. The segment at 1196-1234 (SEGLGDGPLVACASNGHAAGSGGHQSGADSESQEENTQL) is disordered. Residues 1231 to 1234 (NTQL) form an interaction with SHANK2 region.

In terms of assembly, interacts with LPAR2. Interacts with SHANK2. It depends on Ca(2+) as a cofactor. As to expression, expressed in parotid gland, brain, liver, uterus, lung, heart, adrenal gland, and ovary. Not detected in spleen, pancreas, intestine, thymus or kidney.

The protein resides in the cytoplasm. The protein localises to the membrane. It localises to the nucleus. It catalyses the reaction a 1,2-diacyl-sn-glycero-3-phospho-(1D-myo-inositol-4,5-bisphosphate) + H2O = 1D-myo-inositol 1,4,5-trisphosphate + a 1,2-diacyl-sn-glycerol + H(+). The catalysed reaction is a 1,2-diacyl-sn-glycero-3-phospho-(1D-myo-inositol) + H2O = 1D-myo-inositol 1-phosphate + a 1,2-diacyl-sn-glycerol + H(+). Its activity is regulated as follows. Activated by G(q)/G(11) G alpha proteins in response to ligand-binding to G protein-coupled receptors. Its function is as follows. Catalyzes the production of the second messenger molecules diacylglycerol (DAG) and inositol 1,4,5-trisphosphate (IP3). Key transducer of G protein-coupled receptor signaling: activated by G(q)/G(11) G alpha proteins downstream of G protein-coupled receptors activation. In neutrophils, participates in a phospholipase C-activating N-formyl peptide-activated GPCR (G protein-coupled receptor) signaling pathway by promoting RASGRP4 activation by DAG, to promote neutrophil functional responses. This Rattus norvegicus (Rat) protein is 1-phosphatidylinositol 4,5-bisphosphate phosphodiesterase beta-3.